The following is a 145-amino-acid chain: Aegerolysin Aa-Pri1 (145 aa).

The propeptide occupies 1–8 (MDSNKDER).

This sequence belongs to the aegerolysin family.

In Cyclocybe aegerita (Black poplar mushroom), this protein is Aegerolysin Aa-Pri1 (AA-PRI1).